The primary structure comprises 360 residues: Phenylalanine--tRNA ligase alpha subunit (360 aa).

Residue Glu-260 coordinates Mg(2+).

The protein belongs to the class-II aminoacyl-tRNA synthetase family. Phe-tRNA synthetase alpha subunit type 1 subfamily. As to quaternary structure, tetramer of two alpha and two beta subunits. The cofactor is Mg(2+).

It localises to the cytoplasm. The catalysed reaction is tRNA(Phe) + L-phenylalanine + ATP = L-phenylalanyl-tRNA(Phe) + AMP + diphosphate + H(+). The polypeptide is Phenylalanine--tRNA ligase alpha subunit (Rhizobium johnstonii (strain DSM 114642 / LMG 32736 / 3841) (Rhizobium leguminosarum bv. viciae)).